Consider the following 321-residue polypeptide: Thylakoid-associated protein sll1697 (321 aa).

Its subcellular location is the cellular thylakoid membrane. This is Thylakoid-associated protein sll1697 from Synechocystis sp. (strain ATCC 27184 / PCC 6803 / Kazusa).